The chain runs to 69 residues: MSKECIFCGKKPQVGNLVSHSNIKTKRRFNPNLQRVRHQFADGSVRTLTVCTRCLRSGVVTKPLVRKQG.

Belongs to the bacterial ribosomal protein bL28 family.

The sequence is that of Large ribosomal subunit protein bL28 from Desulfovibrio desulfuricans (strain ATCC 27774 / DSM 6949 / MB).